We begin with the raw amino-acid sequence, 313 residues long: Ribosomal RNA small subunit methyltransferase H (313 aa).

Residues 35–37, Asp55, Phe79, Asp101, and Gln108 contribute to the S-adenosyl-L-methionine site; that span reads GGH.

This sequence belongs to the methyltransferase superfamily. RsmH family.

The protein resides in the cytoplasm. The enzyme catalyses cytidine(1402) in 16S rRNA + S-adenosyl-L-methionine = N(4)-methylcytidine(1402) in 16S rRNA + S-adenosyl-L-homocysteine + H(+). Functionally, specifically methylates the N4 position of cytidine in position 1402 (C1402) of 16S rRNA. The sequence is that of Ribosomal RNA small subunit methyltransferase H from Klebsiella pneumoniae subsp. pneumoniae (strain ATCC 700721 / MGH 78578).